We begin with the raw amino-acid sequence, 443 residues long: Tol-Pal system protein TolB (443 aa).

The N-terminal stretch at 1-31 (MMIMTTRTFFSWFIVICAFWLTSFSSVPVHA) is a signal peptide. The disordered stretch occupies residues 422-443 (ERQLPTPNDASDPAWSPLLNIQ).

It belongs to the TolB family. The Tol-Pal system is composed of five core proteins: the inner membrane proteins TolA, TolQ and TolR, the periplasmic protein TolB and the outer membrane protein Pal. They form a network linking the inner and outer membranes and the peptidoglycan layer.

The protein localises to the periplasm. Part of the Tol-Pal system, which plays a role in outer membrane invagination during cell division and is important for maintaining outer membrane integrity. The polypeptide is Tol-Pal system protein TolB (Bartonella henselae (strain ATCC 49882 / DSM 28221 / CCUG 30454 / Houston 1) (Rochalimaea henselae)).